The sequence spans 315 residues: Lipoyl synthase (315 aa).

[4Fe-4S] cluster-binding residues include C62, C67, C73, C88, C92, C95, and S302. One can recognise a Radical SAM core domain in the interval 74–291 (FGKGTATFMI…ETEALRMGFR (218 aa)).

The protein belongs to the radical SAM superfamily. Lipoyl synthase family. [4Fe-4S] cluster is required as a cofactor.

The protein localises to the cytoplasm. The enzyme catalyses [[Fe-S] cluster scaffold protein carrying a second [4Fe-4S](2+) cluster] + N(6)-octanoyl-L-lysyl-[protein] + 2 oxidized [2Fe-2S]-[ferredoxin] + 2 S-adenosyl-L-methionine + 4 H(+) = [[Fe-S] cluster scaffold protein] + N(6)-[(R)-dihydrolipoyl]-L-lysyl-[protein] + 4 Fe(3+) + 2 hydrogen sulfide + 2 5'-deoxyadenosine + 2 L-methionine + 2 reduced [2Fe-2S]-[ferredoxin]. It functions in the pathway protein modification; protein lipoylation via endogenous pathway; protein N(6)-(lipoyl)lysine from octanoyl-[acyl-carrier-protein]: step 2/2. Functionally, catalyzes the radical-mediated insertion of two sulfur atoms into the C-6 and C-8 positions of the octanoyl moiety bound to the lipoyl domains of lipoate-dependent enzymes, thereby converting the octanoylated domains into lipoylated derivatives. This Azoarcus sp. (strain BH72) protein is Lipoyl synthase.